Here is a 242-residue protein sequence, read N- to C-terminus: Venom nerve growth factor 2 (242 aa).

A signal peptide spans 1–18; it reads MSMLCYTLIIAFLIGIWA. Residues 19 to 125 constitute a propeptide that is removed on maturation; that stretch reads APKSEDNVPL…ALNRNIRSKR (107 aa). Residues 46-69 are disordered; it reads KALKTSRNTDQRHPAPKKAEDQEL. Positions 52-66 are enriched in basic and acidic residues; that stretch reads RNTDQRHPAPKKAED. Disulfide bonds link C139–C203, C181–C231, and C191–C233. Residue N147 is glycosylated (N-linked (GlcNAc...) asparagine).

The protein belongs to the NGF-beta family. As to quaternary structure, homodimer; non-covalently linked. In terms of tissue distribution, expressed by the venom gland.

Its subcellular location is the secreted. Nerve growth factor is important for the development and maintenance of the sympathetic and sensory nervous systems. It stimulates division and differentiation of sympathetic and embryonic sensory neurons as well as basal forebrain cholinergic neurons in the brain. Its relevance in the snake venom is not clear. However, it has been shown to inhibit metalloproteinase-dependent proteolysis of platelet glycoprotein Ib alpha, suggesting a metalloproteinase inhibition to prevent metalloprotease autodigestion and/or protection against prey proteases. Binds a lipid between the two protein chains in the homodimer. The lipid-bound form promotes histamine relase from mouse mast cells, contrary to the lipid-free form. The sequence is that of Venom nerve growth factor 2 from Demansia vestigiata (Lesser black whip snake).